The chain runs to 169 residues: MKKTIIVFIILAFMLNCKNKSNDAEPNNDLDEKSQAKSNLVDEDRIEFSKATPLEKLVSRLNLNNTEKETLTFLTNLLKEKLVDPNIGLHFKNSGGDESKIEESVQKFLSELKEDEIKDLLAKIKENKDKKEKDPEELNTYKSILASGFDGIFNQADSKTTLNKLKDTI.

Its subcellular location is the cell outer membrane. In Borreliella burgdorferi (strain ATCC 35210 / DSM 4680 / CIP 102532 / B31) (Borrelia burgdorferi), this protein is Putative outer membrane protein BBA03.